We begin with the raw amino-acid sequence, 229 residues long: Potassium/proton antiporter CemA (229 aa).

The next 3 helical transmembrane spans lie at Phe7–Phe27, Ile107–Gly127, and Ile189–Ile209.

This sequence belongs to the CemA family.

Its subcellular location is the plastid. It localises to the chloroplast inner membrane. It catalyses the reaction K(+)(in) + H(+)(out) = K(+)(out) + H(+)(in). Its function is as follows. Contributes to K(+)/H(+) antiport activity by supporting proton efflux to control proton extrusion and homeostasis in chloroplasts in a light-dependent manner to modulate photosynthesis. Prevents excessive induction of non-photochemical quenching (NPQ) under continuous-light conditions. Indirectly promotes efficient inorganic carbon uptake into chloroplasts. This chain is Potassium/proton antiporter CemA, found in Lactuca sativa (Garden lettuce).